The following is a 216-amino-acid chain: 3-isopropylmalate dehydratase small subunit (216 aa).

It belongs to the LeuD family. LeuD type 1 subfamily. Heterodimer of LeuC and LeuD.

The enzyme catalyses (2R,3S)-3-isopropylmalate = (2S)-2-isopropylmalate. The protein operates within amino-acid biosynthesis; L-leucine biosynthesis; L-leucine from 3-methyl-2-oxobutanoate: step 2/4. Its function is as follows. Catalyzes the isomerization between 2-isopropylmalate and 3-isopropylmalate, via the formation of 2-isopropylmaleate. The sequence is that of 3-isopropylmalate dehydratase small subunit from Burkholderia ambifaria (strain MC40-6).